Consider the following 466-residue polypeptide: Soluble pyridine nucleotide transhydrogenase (466 aa).

Residue 36–45 (ERYHNIGGGC) participates in FAD binding.

Belongs to the class-I pyridine nucleotide-disulfide oxidoreductase family. It depends on FAD as a cofactor.

It is found in the cytoplasm. The catalysed reaction is NAD(+) + NADPH = NADH + NADP(+). Its function is as follows. Conversion of NADPH, generated by peripheral catabolic pathways, to NADH, which can enter the respiratory chain for energy generation. The chain is Soluble pyridine nucleotide transhydrogenase from Erwinia tasmaniensis (strain DSM 17950 / CFBP 7177 / CIP 109463 / NCPPB 4357 / Et1/99).